Here is a 154-residue protein sequence, read N- to C-terminus: Protein X (154 aa).

The interval 28 to 48 (RTLPGSLGAVPPPSSSAVPAD) is disordered. Over residues 30-46 (LPGSLGAVPPPSSSAVP) the composition is skewed to low complexity. Positions 68-117 (PCALRFTSARRMETTVNAPWSLPTVLHKRTLGLSGRSMTWIEDYIKDCVF) are mitochondrial targeting sequence.

It belongs to the orthohepadnavirus protein X family. May form homodimer. May interact with host CEBPA, CFLAR, CREB1, DDB1, E4F1, HBXIP, HSPD1/HSP60, NFKBIA, POLR2E and SMAD4. Interacts with host SMC5-SMC6 complex and induces its degradation. Interacts with host TRPC4AP; leading to prevent ubiquitination of TRPC4AP. Interacts with host PLSCR1; this interaction promotes ubiquitination and degradation of HBx and impairs HBx-mediated cell proliferation. Post-translationally, a fraction may be phosphorylated in insect cells and HepG2 cells, a human hepatoblastoma cell line. Phosphorylated in vitro by host protein kinase C or mitogen-activated protein kinase. N-acetylated in insect cells.

It is found in the host cytoplasm. It localises to the host nucleus. The protein resides in the host mitochondrion. In terms of biological role, multifunctional protein that plays a role in silencing host antiviral defenses and promoting viral transcription. Does not seem to be essential for HBV infection. May be directly involved in development of cirrhosis and liver cancer (hepatocellular carcinoma). Most of cytosolic activities involve modulation of cytosolic calcium. The effect on apoptosis is controversial depending on the cell types in which the studies have been conducted. May induce apoptosis by localizing in mitochondria and causing loss of mitochondrial membrane potential. May also modulate apoptosis by binding host CFLAR, a key regulator of the death-inducing signaling complex (DISC). Promotes viral transcription by using the host E3 ubiquitin ligase DDB1 to target the SMC5-SMC6 complex to proteasomal degradation. This host complex would otherwise bind to viral episomal DNA, and prevents its transcription. Moderately stimulates transcription of many different viral and cellular transcription elements. Promoters and enhancers stimulated by HBx contain DNA binding sites for NF-kappa-B, AP-1, AP-2, c-EBP, ATF/CREB, or the calcium-activated factor NF-AT. In Homo sapiens (Human), this protein is Protein X.